Consider the following 530-residue polypeptide: MTQTTPDSREDAWLERSRATLAKAQPGARAEAVGRVEHVADGIALVSGLPDVRLNELLRFEGDRFGFALTLDADTIGAVLLDDADAITAGSIVTGTGQVVQVPVGPGLTGRVVDPLGRPLDGRGAVHADARMPIERPAPSIIERDLVAEPLATGILLIDALFAIGRGQRELIIGDRATGKTAIAIDAIVNQKNSDVICVYVAIGQRASAVERVIAAVREHGAPERCVFVFASSAASAGLQWIAPFSAMTIAEYFRDRGQHALVVIDDLTRHAATHRELALLTREPPGREAYPGDIFYLHARLLERAAKLSPERGGGSLTALPIAETDAGNLSAYIPTNLISITDGQIVLDTGLFAANQRPAIDVGLSVSRVGGKAQMPALRNVSGRLRLDYSQFLELEMFSRFGGLTEARVKAQVVRGERIRALITQPRFTPLRPVDEVALLGALAEGVFDALPVDLLPAIRTRVAAHLDAHGGNAGAVLEDTGTLDATAQALLVAAVRTLAQDCATASATAPPDPPAASAAELPQPDSP.

174-181 (GDRATGKT) serves as a coordination point for ATP. Over residues 507–522 (TASATAPPDPPAASAA) the composition is skewed to low complexity. The segment at 507 to 530 (TASATAPPDPPAASAAELPQPDSP) is disordered.

Belongs to the ATPase alpha/beta chains family. In terms of assembly, F-type ATPases have 2 components, CF(1) - the catalytic core - and CF(0) - the membrane proton channel. CF(1) has five subunits: alpha(3), beta(3), gamma(1), delta(1), epsilon(1). CF(0) has three main subunits: a(1), b(2) and c(9-12). The alpha and beta chains form an alternating ring which encloses part of the gamma chain. CF(1) is attached to CF(0) by a central stalk formed by the gamma and epsilon chains, while a peripheral stalk is formed by the delta and b chains.

It is found in the cell inner membrane. It catalyses the reaction ATP + H2O + 4 H(+)(in) = ADP + phosphate + 5 H(+)(out). Functionally, produces ATP from ADP in the presence of a proton gradient across the membrane. The alpha chain is a regulatory subunit. The chain is ATP synthase subunit alpha 3 from Paraburkholderia xenovorans (strain LB400).